The sequence spans 368 residues: Zinc finger protein 24 (368 aa).

Lysine 22 participates in a covalent cross-link: Glycyl lysine isopeptide (Lys-Gly) (interchain with G-Cter in SUMO2). Lysine 27 participates in a covalent cross-link: Glycyl lysine isopeptide (Lys-Gly) (interchain with G-Cter in SUMO1); alternate. Residue lysine 27 forms a Glycyl lysine isopeptide (Lys-Gly) (interchain with G-Cter in SUMO2); alternate linkage. The SCAN box domain occupies 52–134 (RQRFRQFGYQ…TVLEDLESEL (83 aa)). Phosphoserine is present on residues serine 132 and serine 142. Glycyl lysine isopeptide (Lys-Gly) (interchain with G-Cter in SUMO2) cross-links involve residues lysine 147, lysine 177, and lysine 236. The C2H2-type 1 zinc-finger motif lies at 251-273 (HICDECGKHFSQGSALILHQRIH). Positions 251 to 301 (HICDECGKHFSQGSALILHQRIHSGEKPYGCVECGKAFSRSSILVQHQRVH) are necessary and sufficient for nuclear localization. Residue serine 274 is modified to Phosphoserine. Glycyl lysine isopeptide (Lys-Gly) (interchain with G-Cter in SUMO2) cross-links involve residues lysine 277 and lysine 286. 3 consecutive C2H2-type zinc fingers follow at residues 279–301 (YGCVECGKAFSRSSILVQHQRVH), 307–329 (YKCLECGKAFSQNSGLINHQRIH), and 335–357 (YECVQCGKSYSQSSNLFRHXXXH). Serine 292 carries the post-translational modification Phosphoserine. Tyrosine 335 is modified (phosphotyrosine). Residues lysine 361 and lysine 367 each participate in a glycyl lysine isopeptide (Lys-Gly) (interchain with G-Cter in SUMO2) cross-link.

This sequence belongs to the krueppel C2H2-type zinc-finger protein family. Sumoylated.

Its subcellular location is the nucleus. Functionally, transcription factor required for myelination of differentiated oligodendrocytes. Required for the conversion of oligodendrocytes from the premyelinating to the myelinating state. In the developing central nervous system (CNS), involved in the maintenance in the progenitor stage by promoting the cell cycle. Specifically binds to the 5'-TCAT-3' DNA sequence. Has transcription repressor activity in vitro. This Pan paniscus (Pygmy chimpanzee) protein is Zinc finger protein 24 (ZNF24).